A 128-amino-acid polypeptide reads, in one-letter code: Phosphoribosyl-AMP cyclohydrolase (128 aa).

Aspartate 77 provides a ligand contact to Mg(2+). Zn(2+) is bound at residue cysteine 78. Residues aspartate 79 and aspartate 81 each coordinate Mg(2+). Residues cysteine 94 and cysteine 101 each coordinate Zn(2+).

It belongs to the PRA-CH family. Homodimer. Mg(2+) is required as a cofactor. Requires Zn(2+) as cofactor.

The protein resides in the cytoplasm. It carries out the reaction 1-(5-phospho-beta-D-ribosyl)-5'-AMP + H2O = 1-(5-phospho-beta-D-ribosyl)-5-[(5-phospho-beta-D-ribosylamino)methylideneamino]imidazole-4-carboxamide. It functions in the pathway amino-acid biosynthesis; L-histidine biosynthesis; L-histidine from 5-phospho-alpha-D-ribose 1-diphosphate: step 3/9. Functionally, catalyzes the hydrolysis of the adenine ring of phosphoribosyl-AMP. The protein is Phosphoribosyl-AMP cyclohydrolase of Granulibacter bethesdensis (strain ATCC BAA-1260 / CGDNIH1).